Reading from the N-terminus, the 51-residue chain is uncharacterized protein (51 aa).

Its function is as follows. This protein is non-essential for virus function. This is an uncharacterized protein from Sulfolobus spindle-shape virus 1 (SSV1).